Consider the following 410-residue polypeptide: Protein disulfide isomerase CRELD1 (410 aa).

The first 29 residues, 1–29 (MGMSRRMFLTVYGSLWLLLLLSRPGVSKP), serve as a signal peptide directing secretion. Residues 30-352 (QLCQTCQNLV…GLFDDITDDE (323 aa)) are Extracellular-facing. The CXXC signature appears at 32–35 (CQTC). Disulfide bonds link Cys-32-Cys-35, Cys-141-Cys-155, Cys-149-Cys-167, and Cys-169-Cys-178. The EGF-like 1 domain maps to 139-179 (LSCPGGTEKPCSGNGQCNGDGTRFGTGVCDCYTSYGGPVCM). FU repeat units follow at residues 194-243 (HLVC…DHCK) and 254-301 (SYEC…ELPK). Positions 264 to 267 (CIGC) match the CXXC motif. Intrachain disulfides connect Cys-264/Cys-267, Cys-295/Cys-309, Cys-302/Cys-318, and Cys-320/Cys-331. In terms of domain architecture, EGF-like 2; calcium-binding spans 291–332 (DVDECDSELPKCKGSHEECVNTEGSFTCVCEKDYSRIDGMCR). The chain crosses the membrane as a helical span at residues 353 to 373 (VVVLQQMFFGVVICALATLAA). Position 374 (Lys-374) is a topological domain, cytoplasmic. Residues 375 to 395 (GDMVFTAIFIGAVAAMAGYWL) form a helical membrane-spanning segment. Residues 396 to 410 (SEKGDRALDSFMKGR) are Extracellular-facing.

The protein belongs to the CRELD family.

It is found in the membrane. The enzyme catalyses Catalyzes the rearrangement of -S-S- bonds in proteins.. In terms of biological role, protein disulfide isomerase. Promotes the localization of acetylcholine receptors (AChRs) to the plasma membrane. This chain is Protein disulfide isomerase CRELD1 (creld1), found in Xenopus tropicalis (Western clawed frog).